The chain runs to 297 residues: 4-hydroxy-tetrahydrodipicolinate synthase (297 aa).

Thr-49 contacts pyruvate. Catalysis depends on Tyr-137, which acts as the Proton donor/acceptor. Catalysis depends on Lys-166, which acts as the Schiff-base intermediate with substrate. Ile-208 contacts pyruvate.

The protein belongs to the DapA family. As to quaternary structure, homotetramer; dimer of dimers.

Its subcellular location is the cytoplasm. The catalysed reaction is L-aspartate 4-semialdehyde + pyruvate = (2S,4S)-4-hydroxy-2,3,4,5-tetrahydrodipicolinate + H2O + H(+). It participates in amino-acid biosynthesis; L-lysine biosynthesis via DAP pathway; (S)-tetrahydrodipicolinate from L-aspartate: step 3/4. In terms of biological role, catalyzes the condensation of (S)-aspartate-beta-semialdehyde [(S)-ASA] and pyruvate to 4-hydroxy-tetrahydrodipicolinate (HTPA). The chain is 4-hydroxy-tetrahydrodipicolinate synthase from Prosthecochloris aestuarii (strain DSM 271 / SK 413).